A 449-amino-acid polypeptide reads, in one-letter code: Trigger factor (449 aa).

The PPIase FKBP-type domain occupies 162–242 (GDFVTIDMTV…VRAVREKQVP (81 aa)). The interval 428–449 (APVNLEGGSTPAAEAEPAVSEA) is disordered. Residues 438–449 (PAAEAEPAVSEA) are compositionally biased toward low complexity.

This sequence belongs to the FKBP-type PPIase family. Tig subfamily.

The protein localises to the cytoplasm. The enzyme catalyses [protein]-peptidylproline (omega=180) = [protein]-peptidylproline (omega=0). Involved in protein export. Acts as a chaperone by maintaining the newly synthesized protein in an open conformation. Functions as a peptidyl-prolyl cis-trans isomerase. This Acidothermus cellulolyticus (strain ATCC 43068 / DSM 8971 / 11B) protein is Trigger factor.